The primary structure comprises 603 residues: Aspartate--tRNA(Asp/Asn) ligase (603 aa).

The aspartate stretch occupies residues 205-208; sequence QLFK. Arg-227 is a binding site for L-aspartate. ATP-binding positions include 227–229 and Gln-236; that span reads RDE. His-463 serves as a coordination point for L-aspartate. Residue Glu-497 coordinates ATP. Residue Arg-504 participates in L-aspartate binding. 549-552 serves as a coordination point for ATP; sequence GMDR.

The protein belongs to the class-II aminoacyl-tRNA synthetase family. Type 1 subfamily. In terms of assembly, homodimer.

The protein resides in the cytoplasm. The enzyme catalyses tRNA(Asx) + L-aspartate + ATP = L-aspartyl-tRNA(Asx) + AMP + diphosphate. Its function is as follows. Aspartyl-tRNA synthetase with relaxed tRNA specificity since it is able to aspartylate not only its cognate tRNA(Asp) but also tRNA(Asn). Reaction proceeds in two steps: L-aspartate is first activated by ATP to form Asp-AMP and then transferred to the acceptor end of tRNA(Asp/Asn). The protein is Aspartate--tRNA(Asp/Asn) ligase of Anaeromyxobacter dehalogenans (strain 2CP-C).